A 440-amino-acid polypeptide reads, in one-letter code: Platelet-activating factor acetylhydrolase (440 aa).

The first 21 residues, 1-21, serve as a signal peptide directing secretion; that stretch reads MVPLKLQALFCLLCCLPWVHP. 3 N-linked (GlcNAc...) asparagine glycosylation sites follow: asparagine 59, asparagine 75, and asparagine 199. Residue serine 272 is the Nucleophile of the active site. Active-site charge relay system residues include aspartate 295 and histidine 350.

It belongs to the AB hydrolase superfamily. Lipase family. N-glycosylated. Plasma.

Its subcellular location is the secreted. The protein localises to the extracellular space. The enzyme catalyses a 1-O-alkyl-2-acetyl-sn-glycero-3-phosphocholine + H2O = a 1-O-alkyl-sn-glycero-3-phosphocholine + acetate + H(+). It catalyses the reaction 1-O-decyl-2-acetyl-sn-glycero-3-phosphocholine + H2O = 1-O-decyl-sn-glycero-3-phosphocholine + acetate + H(+). It carries out the reaction 1-O-dodecyl-2-acetyl-sn-glycero-3-phosphocholine + H2O = 1-O-dodecyl-sn-glycero-3-phosphocholine + acetate + H(+). The catalysed reaction is 1-O-tetradecyl-2-acetyl-sn-glycero-3-phosphocholine + H2O = 1-O-tetradecyl-sn-glycero-3-phosphocholine + acetate + H(+). The enzyme catalyses 1-O-hexadecyl-2-acetyl-sn-glycero-3-phosphocholine + H2O = 1-O-hexadecyl-sn-glycero-3-phosphocholine + acetate + H(+). It catalyses the reaction 1-O-octadecyl-2-acetyl-sn-glycero-3-phosphocholine + H2O = 1-O-octadecyl-sn-glycero-3-phosphocholine + acetate + H(+). It carries out the reaction 1-hexadecanoyl-2-acetyl-sn-glycero-3-phosphocholine + H2O = 1-hexadecanoyl-sn-glycero-3-phosphocholine + acetate + H(+). The catalysed reaction is 1-hexadecanoyl-2-propionyl-sn-glycero-3-phosphocholine + H2O = propanoate + 1-hexadecanoyl-sn-glycero-3-phosphocholine + H(+). The enzyme catalyses 1-hexadecanoyl-2-butanoyl-sn-glycero-3-phosphocholine + H2O = butanoate + 1-hexadecanoyl-sn-glycero-3-phosphocholine + H(+). It catalyses the reaction 1-hexadecanoyl-2-pentanoyl-sn-glycero-3-phosphocholine + H2O = pentanoate + 1-hexadecanoyl-sn-glycero-3-phosphocholine + H(+). It carries out the reaction 1-hexadecanoyl-2-glutaroyl-sn-glycero-3-phosphocholine + H2O = glutarate + 1-hexadecanoyl-sn-glycero-3-phosphocholine + H(+). The catalysed reaction is 1-hexadecanoyl-2-(5-oxopentanoyl)-sn-glycero-3-phosphocholine + H2O = 5-oxopentanoate + 1-hexadecanoyl-sn-glycero-3-phosphocholine + H(+). The enzyme catalyses 1-hexadecanoyl-2-(9-oxononanoyl)-sn-glycero-3-phosphocholine + H2O = 9-oxononanoate + 1-hexadecanoyl-sn-glycero-3-phosphocholine + H(+). It catalyses the reaction 1-hexadecanoyl-2-[9-hydroperoxy-(10E-octadecenoyl)]-sn-glycero-3-phosphocholine + H2O = 9-hydroperoxy-10E-octadecenoate + 1-hexadecanoyl-sn-glycero-3-phosphocholine + H(+). It carries out the reaction 1-hexadecanoyl-2-(10-hydroperoxy-8E-octadecenoyl)-sn-glycero-3-phosphocholine + H2O = 10-hydroperoxy-(8E)-octadecenoate + 1-hexadecanoyl-sn-glycero-3-phosphocholine + H(+). Functionally, lipoprotein-associated calcium-independent phospholipase A2 involved in phospholipid catabolism during inflammatory and oxidative stress response. At the lipid-aqueous interface, hydrolyzes the ester bond of fatty acyl group attached at sn-2 position of phospholipids (phospholipase A2 activity). Specifically targets phospholipids with a short-chain fatty acyl group at sn-2 position. Can hydrolyze phospholipids with long fatty acyl chains, only if they carry oxidized functional groups. Hydrolyzes and inactivates platelet-activating factor (PAF, 1-O-alkyl-2-acetyl-sn-glycero-3-phosphocholine), a potent pro-inflammatory signaling lipid that acts through PTAFR on various innate immune cells. Hydrolyzes oxidatively truncated phospholipids carrying an aldehyde group at omega position, preventing their accumulation in lipoprotein particles and uncontrolled pro-inflammatory effects. As part of high-density lipoprotein (HDL) particles, can hydrolyze phospholipids having long-chain fatty acyl hydroperoxides at sn-2 position and protect against potential accumulation of these oxylipins in the vascular wall. Catalyzes the release from membrane phospholipids of F2-isoprostanes, lipid biomarkers of cellular oxidative damage. The protein is Platelet-activating factor acetylhydrolase (Pla2g7) of Mus musculus (Mouse).